Consider the following 74-residue polypeptide: DNA-directed RNA polymerase subunit omega (74 aa).

It belongs to the RNA polymerase subunit omega family. In terms of assembly, the RNAP catalytic core consists of 2 alpha, 1 beta, 1 beta' and 1 omega subunit. When a sigma factor is associated with the core the holoenzyme is formed, which can initiate transcription.

The enzyme catalyses RNA(n) + a ribonucleoside 5'-triphosphate = RNA(n+1) + diphosphate. Promotes RNA polymerase assembly. Latches the N- and C-terminal regions of the beta' subunit thereby facilitating its interaction with the beta and alpha subunits. This is DNA-directed RNA polymerase subunit omega from Solidesulfovibrio magneticus (strain ATCC 700980 / DSM 13731 / RS-1) (Desulfovibrio magneticus).